Reading from the N-terminus, the 182-residue chain is Isopentenyl-diphosphate Delta-isomerase (182 aa).

Positions 25 and 32 each coordinate Mn(2+). The Nudix hydrolase domain occupies leucine 30–methionine 164. Residue cysteine 67 is part of the active site. Residue histidine 69 participates in Mn(2+) binding. Residue glutamate 87 participates in Mg(2+) binding. Residues glutamate 114 and glutamate 116 each contribute to the Mn(2+) site. The active site involves glutamate 116.

The protein belongs to the IPP isomerase type 1 family. In terms of assembly, homodimer. Requires Mg(2+) as cofactor. Mn(2+) is required as a cofactor.

The protein resides in the cytoplasm. It carries out the reaction isopentenyl diphosphate = dimethylallyl diphosphate. It functions in the pathway isoprenoid biosynthesis; dimethylallyl diphosphate biosynthesis; dimethylallyl diphosphate from isopentenyl diphosphate: step 1/1. Its function is as follows. Catalyzes the 1,3-allylic rearrangement of the homoallylic substrate isopentenyl (IPP) to its highly electrophilic allylic isomer, dimethylallyl diphosphate (DMAPP). This chain is Isopentenyl-diphosphate Delta-isomerase, found in Shigella boydii serotype 18 (strain CDC 3083-94 / BS512).